The chain runs to 521 residues: Proactivator polypeptide-like 1 (521 aa).

A signal peptide spans M1–A17. A propeptide spanning residues S18–A59 is cleaved from the precursor. One can recognise a Saposin A-type 1 domain in the interval P19–A59. 2 consecutive Saposin B-type domains span residues K60–Q144 and E180–G258. 3 cysteine pairs are disulfide-bonded: C64–C140, C67–C134, and C95–C107. Residues H146 to E180 constitute a propeptide that is removed on maturation. Disulfide bonds link C184/C254, C187/C248, and C213/C224. N201 carries an N-linked (GlcNAc...) asparagine glycan. A propeptide spanning residues A259–M288 is cleaved from the precursor. Saposin B-type domains lie at A290–R370 and Q392–R473. 3 disulfide bridges follow: C294/C366, C297/C360, and C325/C336. N-linked (GlcNAc...) asparagine glycosylation occurs at N311. Residues R370–N391 constitute a propeptide that is removed on maturation. 3 cysteine pairs are disulfide-bonded: C396-C469, C399-C463, and C427-C438. A propeptide spanning residues T474–A521 is cleaved from the precursor. Residues P475–L515 enclose the Saposin A-type 2 domain.

Its subcellular location is the secreted. Functionally, may activate the lysosomal degradation of sphingolipids. The protein is Proactivator polypeptide-like 1 (PSAPL1) of Homo sapiens (Human).